A 744-amino-acid chain; its full sequence is Phosphoribosylformylglycinamidine synthase subunit PurL (744 aa).

His-45 is a catalytic residue. Tyr-48 and Lys-87 together coordinate ATP. Glu-89 provides a ligand contact to Mg(2+). Substrate contacts are provided by residues Ser-90–His-93 and Arg-112. His-91 functions as the Proton acceptor in the catalytic mechanism. Residue Asp-113 coordinates Mg(2+). A substrate-binding site is contributed by Gln-236. Position 264 (Asp-264) interacts with Mg(2+). Residue Glu-308 to Gln-310 participates in substrate binding. Residues Asn-492 and Gly-529 each coordinate ATP. Asn-530 is a Mg(2+) binding site. Ser-532 contributes to the substrate binding site.

Belongs to the FGAMS family. In terms of assembly, monomer. Part of the FGAM synthase complex composed of 1 PurL, 1 PurQ and 2 PurS subunits.

Its subcellular location is the cytoplasm. The enzyme catalyses N(2)-formyl-N(1)-(5-phospho-beta-D-ribosyl)glycinamide + L-glutamine + ATP + H2O = 2-formamido-N(1)-(5-O-phospho-beta-D-ribosyl)acetamidine + L-glutamate + ADP + phosphate + H(+). It participates in purine metabolism; IMP biosynthesis via de novo pathway; 5-amino-1-(5-phospho-D-ribosyl)imidazole from N(2)-formyl-N(1)-(5-phospho-D-ribosyl)glycinamide: step 1/2. Part of the phosphoribosylformylglycinamidine synthase complex involved in the purines biosynthetic pathway. Catalyzes the ATP-dependent conversion of formylglycinamide ribonucleotide (FGAR) and glutamine to yield formylglycinamidine ribonucleotide (FGAM) and glutamate. The FGAM synthase complex is composed of three subunits. PurQ produces an ammonia molecule by converting glutamine to glutamate. PurL transfers the ammonia molecule to FGAR to form FGAM in an ATP-dependent manner. PurS interacts with PurQ and PurL and is thought to assist in the transfer of the ammonia molecule from PurQ to PurL. This Erythrobacter litoralis (strain HTCC2594) protein is Phosphoribosylformylglycinamidine synthase subunit PurL.